A 223-amino-acid chain; its full sequence is Small ribosomal subunit protein uS3 (223 aa).

In terms of domain architecture, KH type-2 spans 39 to 108 (IRNFVKKNSY…NILINIVEVK (70 aa)).

This sequence belongs to the universal ribosomal protein uS3 family. Part of the 30S ribosomal subunit. Forms a tight complex with proteins S10 and S14.

In terms of biological role, binds the lower part of the 30S subunit head. Binds mRNA in the 70S ribosome, positioning it for translation. This chain is Small ribosomal subunit protein uS3, found in Clostridium botulinum (strain 657 / Type Ba4).